A 382-amino-acid polypeptide reads, in one-letter code: 3-hydroxyisobutyryl-CoA hydrolase, mitochondrial (382 aa).

Glu-117, Gly-142, Glu-165, and Asp-173 together coordinate substrate.

It belongs to the enoyl-CoA hydratase/isomerase family.

The protein localises to the mitochondrion. The catalysed reaction is 3-hydroxy-2-methylpropanoyl-CoA + H2O = 3-hydroxy-2-methylpropanoate + CoA + H(+). The protein operates within amino-acid degradation; L-valine degradation. Functionally, hydrolyzes 3-hydroxyisobutyryl-CoA (HIBYL-CoA), a saline catabolite. Has high activity toward isobutyryl-CoA. Could be an isobutyryl-CoA dehydrogenase that functions in valine catabolism. Also hydrolyzes 3-hydroxypropanoyl-CoA. This is 3-hydroxyisobutyryl-CoA hydrolase, mitochondrial (hibch) from Danio rerio (Zebrafish).